We begin with the raw amino-acid sequence, 92 residues long: Progonadoliberin-1 (92 aa).

A signal peptide spans Met-1–Gly-23. At Gln-24 the chain carries Pyrrolidone carboxylic acid. Gly-33 is subject to Glycine amide.

It belongs to the GnRH family. Post-translationally, the precursor is cleaved by ACE, which removes the Gly-Lys-Arg peptide at the C-terminus, leading to mature hormone. The mature form of Gonadoliberin-1 is also cleaved and degraded by ACE.

It is found in the secreted. Its function is as follows. Stimulates the secretion of gonadotropins; it stimulates the secretion of both luteinizing and follicle-stimulating hormones. The sequence is that of Progonadoliberin-1 (GNRH1) from Cavia porcellus (Guinea pig).